Reading from the N-terminus, the 88-residue chain is UPF0473 protein CLL_A1177 (88 aa).

It belongs to the UPF0473 family.

This chain is UPF0473 protein CLL_A1177, found in Clostridium botulinum (strain Eklund 17B / Type B).